Consider the following 274-residue polypeptide: Formamidopyrimidine-DNA glycosylase (274 aa).

Catalysis depends on Pro2, which acts as the Schiff-base intermediate with DNA. Glu3 serves as the catalytic Proton donor. The active-site Proton donor; for beta-elimination activity is the Lys58. DNA contacts are provided by His91 and Arg110. The segment at 238–272 adopts an FPG-type zinc-finger fold; that stretch reads QVYDKTGQECVRCGTIIEKIQLGGRGTHFCPNCQR. The active-site Proton donor; for delta-elimination activity is Arg262.

Belongs to the FPG family. Monomer. Zn(2+) is required as a cofactor.

The catalysed reaction is Hydrolysis of DNA containing ring-opened 7-methylguanine residues, releasing 2,6-diamino-4-hydroxy-5-(N-methyl)formamidopyrimidine.. It catalyses the reaction 2'-deoxyribonucleotide-(2'-deoxyribose 5'-phosphate)-2'-deoxyribonucleotide-DNA = a 3'-end 2'-deoxyribonucleotide-(2,3-dehydro-2,3-deoxyribose 5'-phosphate)-DNA + a 5'-end 5'-phospho-2'-deoxyribonucleoside-DNA + H(+). Functionally, involved in base excision repair of DNA damaged by oxidation or by mutagenic agents. Acts as a DNA glycosylase that recognizes and removes damaged bases. Has a preference for oxidized purines, such as 7,8-dihydro-8-oxoguanine (8-oxoG). Has AP (apurinic/apyrimidinic) lyase activity and introduces nicks in the DNA strand. Cleaves the DNA backbone by beta-delta elimination to generate a single-strand break at the site of the removed base with both 3'- and 5'-phosphates. The chain is Formamidopyrimidine-DNA glycosylase from Streptococcus pneumoniae (strain ATCC BAA-255 / R6).